The sequence spans 316 residues: Acetyl-coenzyme A carboxylase carboxyl transferase subunit alpha (316 aa).

The region spanning 39–293 is the CoA carboxyltransferase C-terminal domain; the sequence is KLEEKNAQLT…KKHLQANLTN (255 aa).

The protein belongs to the AccA family. As to quaternary structure, acetyl-CoA carboxylase is a heterohexamer composed of biotin carboxyl carrier protein (AccB), biotin carboxylase (AccC) and two subunits each of ACCase subunit alpha (AccA) and ACCase subunit beta (AccD).

The protein localises to the cytoplasm. It catalyses the reaction N(6)-carboxybiotinyl-L-lysyl-[protein] + acetyl-CoA = N(6)-biotinyl-L-lysyl-[protein] + malonyl-CoA. It functions in the pathway lipid metabolism; malonyl-CoA biosynthesis; malonyl-CoA from acetyl-CoA: step 1/1. Component of the acetyl coenzyme A carboxylase (ACC) complex. First, biotin carboxylase catalyzes the carboxylation of biotin on its carrier protein (BCCP) and then the CO(2) group is transferred by the carboxyltransferase to acetyl-CoA to form malonyl-CoA. The chain is Acetyl-coenzyme A carboxylase carboxyl transferase subunit alpha from Coxiella burnetii (strain CbuK_Q154) (Coxiella burnetii (strain Q154)).